The following is a 113-amino-acid chain: uncharacterized protein (113 aa).

Residues 1 to 19 (MLSPLSPRIIAAFTTAVGA) form the signal peptide.

This sequence to M.tuberculosis Rv1291c.

This is an uncharacterized protein from Mycobacterium tuberculosis (strain CDC 1551 / Oshkosh).